Consider the following 147-residue polypeptide: Hemoglobin subunit beta-Y (147 aa).

The region spanning 3-147 (HFTAEEKAAI…VANALSLKYH (145 aa)) is the Globin domain. Heme b is bound by residues H64 and H93.

This sequence belongs to the globin family. As to quaternary structure, heterotetramer of two alpha chains and two beta chains.

Its function is as follows. This is a minor early embryonic beta chain. In Mesocricetus auratus (Golden hamster), this protein is Hemoglobin subunit beta-Y (HBBY).